Here is a 303-residue protein sequence, read N- to C-terminus: UDP-N-acetylenolpyruvoylglucosamine reductase (303 aa).

Positions 23–188 (KVGGPADYLV…ISAKFALKPG (166 aa)) constitute an FAD-binding PCMH-type domain. The active site involves R167. The Proton donor role is filled by S217. Residue E287 is part of the active site.

Belongs to the MurB family. The cofactor is FAD.

Its subcellular location is the cytoplasm. It carries out the reaction UDP-N-acetyl-alpha-D-muramate + NADP(+) = UDP-N-acetyl-3-O-(1-carboxyvinyl)-alpha-D-glucosamine + NADPH + H(+). It participates in cell wall biogenesis; peptidoglycan biosynthesis. Its function is as follows. Cell wall formation. The sequence is that of UDP-N-acetylenolpyruvoylglucosamine reductase from Streptococcus uberis (strain ATCC BAA-854 / 0140J).